The following is a 327-amino-acid chain: Phenylalanine--tRNA ligase alpha subunit (327 aa).

Glutamate 253 is a binding site for Mg(2+).

It belongs to the class-II aminoacyl-tRNA synthetase family. Phe-tRNA synthetase alpha subunit type 1 subfamily. Tetramer of two alpha and two beta subunits. Mg(2+) is required as a cofactor.

Its subcellular location is the cytoplasm. It catalyses the reaction tRNA(Phe) + L-phenylalanine + ATP = L-phenylalanyl-tRNA(Phe) + AMP + diphosphate + H(+). In Laribacter hongkongensis (strain HLHK9), this protein is Phenylalanine--tRNA ligase alpha subunit.